Reading from the N-terminus, the 515-residue chain is Probable cytosol aminopeptidase (515 aa).

The Mn(2+) site is built by Lys-279 and Asp-284. Lys-291 is a catalytic residue. Asp-302, Asp-361, and Glu-363 together coordinate Mn(2+). Arg-365 is a catalytic residue.

This sequence belongs to the peptidase M17 family. Mn(2+) is required as a cofactor.

The protein resides in the cytoplasm. The enzyme catalyses Release of an N-terminal amino acid, Xaa-|-Yaa-, in which Xaa is preferably Leu, but may be other amino acids including Pro although not Arg or Lys, and Yaa may be Pro. Amino acid amides and methyl esters are also readily hydrolyzed, but rates on arylamides are exceedingly low.. It catalyses the reaction Release of an N-terminal amino acid, preferentially leucine, but not glutamic or aspartic acids.. Presumably involved in the processing and regular turnover of intracellular proteins. Catalyzes the removal of unsubstituted N-terminal amino acids from various peptides. This Mycobacterium bovis (strain ATCC BAA-935 / AF2122/97) protein is Probable cytosol aminopeptidase.